Here is a 76-residue protein sequence, read N- to C-terminus: Accessory gland-specific peptide 57Dc (76 aa).

Positions 1-20 (MHGTHFLILLLLCGVLGSNG) are cleaved as a signal peptide.

CAMP-dependent phosphorylation. As to expression, lumen fluid of male accessory glands, becomes seminal fluid.

It localises to the secreted. Transferred from male to female during mating and may affect egglaying and behavior after mating. The polypeptide is Accessory gland-specific peptide 57Dc (Mst57Dc) (Drosophila melanogaster (Fruit fly)).